The following is a 307-amino-acid chain: Cilia-and flagella-associated protein 96 (307 aa).

2 disordered regions span residues 73–102 (YSDP…SSGE) and 218–279 (HSQK…GPKT).

This sequence belongs to the CFAP96 family.

The protein localises to the cytoplasm. It localises to the cytoskeleton. It is found in the microtubule organizing center. Its subcellular location is the centrosome. This chain is Cilia-and flagella-associated protein 96 (cfap96.L), found in Xenopus laevis (African clawed frog).